Consider the following 601-residue polypeptide: Glutathione-regulated potassium-efflux system protein KefB (601 aa).

13 helical membrane passes run 5 to 25 (DLLL…PLAA), 29 to 49 (IGAV…GLGF), 55 to 75 (EILH…GLEL), 87 to 107 (IFGV…GLLM), 115 to 135 (AAVI…LQLM), 152 to 172 (VLLF…LLAG), 177 to 197 (HFDW…LIGG), 207 to 227 (FIAA…LVLG), 230 to 250 (LFMD…GILL), 261 to 281 (IAID…VGMA), 284 to 304 (LGVL…LVAV), 326 to 346 (FAGV…TAAS), and 356 to 376 (ALLL…MKLI). Residues 400–518 (KPQVIVVGFG…QAGVTNFSRE (119 aa)) form the RCK N-terminal domain.

It belongs to the monovalent cation:proton antiporter 2 (CPA2) transporter (TC 2.A.37) family. KefB subfamily. As to quaternary structure, interacts with the regulatory subunit KefG.

Its subcellular location is the cell inner membrane. Functionally, pore-forming subunit of a potassium efflux system that confers protection against electrophiles. Catalyzes K(+)/H(+) antiport. The protein is Glutathione-regulated potassium-efflux system protein KefB of Enterobacter sp. (strain 638).